Reading from the N-terminus, the 473-residue chain is Photosystem II CP43 reaction center protein (473 aa).

The propeptide occupies 1 to 14; the sequence is MKTLYSLRRFYPVE. An N-acetylthreonine modification is found at threonine 15. The residue at position 15 (threonine 15) is a Phosphothreonine. The next 5 membrane-spanning stretches (helical) occupy residues 69–93, 134–155, 178–200, 255–275, and 291–312; these read LFEVAHFVPEKPMYEQGLILLPHLA, LLGPETLEESFPFFGYVWKDRN, KALYFGGVYDTWAPGGGDVRKIT, KPFAWARRAFVWSGEAYLSYS, and WFNNTAYPSEFYGPTGPEASQA. Glutamate 367 is a [CaMn4O5] cluster binding site. Residues 447–471 traverse the membrane as a helical segment; the sequence is RARAAAAGFEKGIDRDLEPVLSMTP.

It belongs to the PsbB/PsbC family. PsbC subfamily. As to quaternary structure, PSII is composed of 1 copy each of membrane proteins PsbA, PsbB, PsbC, PsbD, PsbE, PsbF, PsbH, PsbI, PsbJ, PsbK, PsbL, PsbM, PsbT, PsbX, PsbY, PsbZ, Psb30/Ycf12, at least 3 peripheral proteins of the oxygen-evolving complex and a large number of cofactors. It forms dimeric complexes. Binds multiple chlorophylls and provides some of the ligands for the Ca-4Mn-5O cluster of the oxygen-evolving complex. It may also provide a ligand for a Cl- that is required for oxygen evolution. PSII binds additional chlorophylls, carotenoids and specific lipids. serves as cofactor.

It is found in the plastid. The protein localises to the chloroplast thylakoid membrane. Its function is as follows. One of the components of the core complex of photosystem II (PSII). It binds chlorophyll and helps catalyze the primary light-induced photochemical processes of PSII. PSII is a light-driven water:plastoquinone oxidoreductase, using light energy to abstract electrons from H(2)O, generating O(2) and a proton gradient subsequently used for ATP formation. The polypeptide is Photosystem II CP43 reaction center protein (Acorus calamus var. americanus (American sweet flag)).